The sequence spans 193 residues: dCTP deaminase (193 aa).

DCTP-binding positions include 110–115 (RSSLAR), Asp128, 136–138 (VLE), Tyr171, Lys178, and Gln182. Glu138 (proton donor/acceptor) is an active-site residue. Residues 169–193 (RPYNRRQDAKYKDQQGAVASRIDKD) are disordered.

This sequence belongs to the dCTP deaminase family. In terms of assembly, homotrimer.

The enzyme catalyses dCTP + H2O + H(+) = dUTP + NH4(+). It functions in the pathway pyrimidine metabolism; dUMP biosynthesis; dUMP from dCTP (dUTP route): step 1/2. Its function is as follows. Catalyzes the deamination of dCTP to dUTP. In Pectobacterium atrosepticum (strain SCRI 1043 / ATCC BAA-672) (Erwinia carotovora subsp. atroseptica), this protein is dCTP deaminase.